Reading from the N-terminus, the 525-residue chain is UPF0288 protein MA_3997 (525 aa).

The protein belongs to the UPF0288 family.

This Methanosarcina acetivorans (strain ATCC 35395 / DSM 2834 / JCM 12185 / C2A) protein is UPF0288 protein MA_3997.